A 558-amino-acid polypeptide reads, in one-letter code: 2-isopropylmalate synthase (558 aa).

The Pyruvate carboxyltransferase domain occupies 30 to 303 (PIWCSVDLRD…DPGIDCSDIN (274 aa)). Mg(2+)-binding residues include D39, H242, H244, and N278. The interval 437–558 (QPGARLKFLD…ANRIVGRKAR (122 aa)) is regulatory domain.

Belongs to the alpha-IPM synthase/homocitrate synthase family. LeuA type 2 subfamily. As to quaternary structure, homodimer. The cofactor is Mg(2+).

It localises to the cytoplasm. The enzyme catalyses 3-methyl-2-oxobutanoate + acetyl-CoA + H2O = (2S)-2-isopropylmalate + CoA + H(+). It functions in the pathway amino-acid biosynthesis; L-leucine biosynthesis; L-leucine from 3-methyl-2-oxobutanoate: step 1/4. In terms of biological role, catalyzes the condensation of the acetyl group of acetyl-CoA with 3-methyl-2-oxobutanoate (2-ketoisovalerate) to form 3-carboxy-3-hydroxy-4-methylpentanoate (2-isopropylmalate). This chain is 2-isopropylmalate synthase, found in Mesorhizobium japonicum (strain LMG 29417 / CECT 9101 / MAFF 303099) (Mesorhizobium loti (strain MAFF 303099)).